The chain runs to 152 residues: D-aminoacyl-tRNA deacylase (152 aa).

A Gly-cisPro motif, important for rejection of L-amino acids motif is present at residues 137 to 138 (GP).

The protein belongs to the DTD family. Homodimer.

The protein resides in the cytoplasm. The catalysed reaction is glycyl-tRNA(Ala) + H2O = tRNA(Ala) + glycine + H(+). The enzyme catalyses a D-aminoacyl-tRNA + H2O = a tRNA + a D-alpha-amino acid + H(+). In terms of biological role, an aminoacyl-tRNA editing enzyme that deacylates mischarged D-aminoacyl-tRNAs. Also deacylates mischarged glycyl-tRNA(Ala), protecting cells against glycine mischarging by AlaRS. Acts via tRNA-based rather than protein-based catalysis; rejects L-amino acids rather than detecting D-amino acids in the active site. By recycling D-aminoacyl-tRNA to D-amino acids and free tRNA molecules, this enzyme counteracts the toxicity associated with the formation of D-aminoacyl-tRNA entities in vivo and helps enforce protein L-homochirality. The polypeptide is D-aminoacyl-tRNA deacylase (Aromatoleum aromaticum (strain DSM 19018 / LMG 30748 / EbN1) (Azoarcus sp. (strain EbN1))).